The chain runs to 186 residues: Ribosome-recycling factor (186 aa).

It belongs to the RRF family.

It is found in the cytoplasm. Its function is as follows. Responsible for the release of ribosomes from messenger RNA at the termination of protein biosynthesis. May increase the efficiency of translation by recycling ribosomes from one round of translation to another. This is Ribosome-recycling factor from Rickettsia canadensis (strain McKiel).